We begin with the raw amino-acid sequence, 431 residues long: Asparagine--tRNA ligase 1 (431 aa).

Belongs to the class-II aminoacyl-tRNA synthetase family. As to quaternary structure, homodimer.

Its subcellular location is the cytoplasm. The catalysed reaction is tRNA(Asn) + L-asparagine + ATP = L-asparaginyl-tRNA(Asn) + AMP + diphosphate + H(+). In Lactiplantibacillus plantarum (strain ATCC BAA-793 / NCIMB 8826 / WCFS1) (Lactobacillus plantarum), this protein is Asparagine--tRNA ligase 1 (asnS1).